The sequence spans 249 residues: Isoprenyl transferase 1 (249 aa).

Asp30 is an active-site residue. Asp30 is a binding site for Mg(2+). Substrate contacts are provided by residues 31-34 (GNGR), Trp35, Arg43, His47, and 75-77 (STE). The Proton acceptor role is filled by Asn78. Substrate contacts are provided by residues Trp79, Arg81, Arg198, and 204-206 (RMS). Glu217 lines the Mg(2+) pocket.

Belongs to the UPP synthase family. As to quaternary structure, homodimer. Mg(2+) is required as a cofactor.

Catalyzes the condensation of isopentenyl diphosphate (IPP) with allylic pyrophosphates generating different type of terpenoids. This is Isoprenyl transferase 1 from Tropheryma whipplei (strain Twist) (Whipple's bacillus).